We begin with the raw amino-acid sequence, 233 residues long: Lipoprotein-releasing system ATP-binding protein LolD (233 aa).

The ABC transporter domain maps to 6 to 233; the sequence is LQCDNLCKRY…TAELSLMGAE (228 aa). An ATP-binding site is contributed by 42–49; sequence GSSGSGKS.

This sequence belongs to the ABC transporter superfamily. Lipoprotein translocase (TC 3.A.1.125) family. The complex is composed of two ATP-binding proteins (LolD) and two transmembrane proteins (LolC and LolE).

The protein resides in the cell inner membrane. Its function is as follows. Part of the ABC transporter complex LolCDE involved in the translocation of mature outer membrane-directed lipoproteins, from the inner membrane to the periplasmic chaperone, LolA. Responsible for the formation of the LolA-lipoprotein complex in an ATP-dependent manner. The sequence is that of Lipoprotein-releasing system ATP-binding protein LolD from Salmonella choleraesuis (strain SC-B67).